We begin with the raw amino-acid sequence, 304 residues long: Probable phytol kinase 2, chloroplastic (304 aa).

The transit peptide at 1–59 (MVSLISAHLLSLPSSAPRSRPQSRPPLSPPAAAAAASCSFDLPRPRRLVADGSRRKGTM) directs the protein to the chloroplast. The next 7 helical transmembrane spans lie at 68 to 88 (SGLA…LALL), 113 to 133 (IGMV…APFL), 134 to 154 (AAVA…GVMK), 170 to 190 (ELLK…SIFW), 194 to 214 (PIAI…DIVG), 231 to 251 (AGSI…MHYF), and 256 to 276 (FIEE…TAAL).

This sequence belongs to the polyprenol kinase family.

The protein localises to the plastid. It is found in the chloroplast membrane. It carries out the reaction phytol + CTP = phytyl phosphate + CDP + H(+). It participates in cofactor biosynthesis; tocopherol biosynthesis. Involved in the activation and reutilization of phytol from chlorophyll degradation in plant metabolism, including tocopherol biosynthesis. Catalyzes the conversion of phytol to phytol monophosphate (PMP). The sequence is that of Probable phytol kinase 2, chloroplastic from Oryza sativa subsp. japonica (Rice).